We begin with the raw amino-acid sequence, 144 residues long: Putative 2'-deoxynucleoside 5'-phosphate N-hydrolase 1 (144 aa).

Residues 7 to 13, Tyr22, His39, Glu83, and 107 to 109 each bind substrate; these read YFCGSIR and SGM.

This sequence belongs to the 2'-deoxynucleoside 5'-phosphate N-hydrolase 1 family. As to quaternary structure, monomer and homodimer.

The protein localises to the cytoplasm. Its subcellular location is the nucleus. The enzyme catalyses a pyrimidine 2'-deoxyribonucleoside 5'-phosphate + H2O = a pyrimidine nucleobase + 2-deoxy-D-ribose 5-phosphate. The catalysed reaction is a purine 2'-deoxyribonucleoside 5'-phosphate + H2O = a purine nucleobase + 2-deoxy-D-ribose 5-phosphate. Functionally, catalyzes the cleavage of the N-glycosidic bond of deoxyribonucleoside 5'-monophosphates to yield deoxyribose 5-phosphate and a purine or pyrimidine base. In Trichoplax adhaerens (Trichoplax reptans), this protein is Putative 2'-deoxynucleoside 5'-phosphate N-hydrolase 1.